Here is a 470-residue protein sequence, read N- to C-terminus: tRNA-2-methylthio-N(6)-dimethylallyladenosine synthase (470 aa).

Residues 5 to 122 (RKLYVKSFGC…LPELLAEAKA (118 aa)) form the MTTase N-terminal domain. [4Fe-4S] cluster is bound by residues C14, C50, C85, C163, C167, and C170. Residues 149–383 (RSRGPAAFVT…LLEASKAAFD (235 aa)) form the Radical SAM core domain. Residues 384–446 (ESCRGRTFDI…PNSLAGVPAE (63 aa)) enclose the TRAM domain. The disordered stretch occupies residues 439-470 (SLAGVPAEASEPSVSQSPVSSARSRPLAAMEA). Low complexity predominate over residues 444 to 464 (PAEASEPSVSQSPVSSARSRP).

The protein belongs to the methylthiotransferase family. MiaB subfamily. As to quaternary structure, monomer. The cofactor is [4Fe-4S] cluster.

It localises to the cytoplasm. The enzyme catalyses N(6)-dimethylallyladenosine(37) in tRNA + (sulfur carrier)-SH + AH2 + 2 S-adenosyl-L-methionine = 2-methylsulfanyl-N(6)-dimethylallyladenosine(37) in tRNA + (sulfur carrier)-H + 5'-deoxyadenosine + L-methionine + A + S-adenosyl-L-homocysteine + 2 H(+). Functionally, catalyzes the methylthiolation of N6-(dimethylallyl)adenosine (i(6)A), leading to the formation of 2-methylthio-N6-(dimethylallyl)adenosine (ms(2)i(6)A) at position 37 in tRNAs that read codons beginning with uridine. This chain is tRNA-2-methylthio-N(6)-dimethylallyladenosine synthase, found in Xanthobacter autotrophicus (strain ATCC BAA-1158 / Py2).